Consider the following 569-residue polypeptide: Ribonuclease J (569 aa).

The Zn(2+) site is built by H81, H83, D85, H86, H150, and D172. Substrate is bound at residue 373-377 (HASGH). Position 399 (H399) interacts with Zn(2+).

It belongs to the metallo-beta-lactamase superfamily. RNA-metabolizing metallo-beta-lactamase-like family. Bacterial RNase J subfamily. As to quaternary structure, homodimer, may be a subunit of the RNA degradosome. Requires Zn(2+) as cofactor.

The protein localises to the cytoplasm. Functionally, an RNase that has 5'-3' exonuclease and possibly endoonuclease activity. Involved in maturation of rRNA and in some organisms also mRNA maturation and/or decay. The protein is Ribonuclease J of Mycoplasma pneumoniae (strain ATCC 29342 / M129 / Subtype 1) (Mycoplasmoides pneumoniae).